The sequence spans 57 residues: Defensin-like protein 302 (57 aa).

Intrachain disulfides connect Cys-19/Cys-39, Cys-26/Cys-44, and Cys-32/Cys-46.

This sequence belongs to the DEFL family.

This is Defensin-like protein 302 from Arabidopsis thaliana (Mouse-ear cress).